The chain runs to 262 residues: Abhydrolase domain-containing protein ACTT2 (262 aa).

The Peroxisomal targeting signal type 1 signature appears at 260 to 262 (SKL).

This sequence belongs to the AB hydrolase superfamily. AKT2 hydrolase family.

The protein localises to the peroxisome. Its pathway is mycotoxin biosynthesis. Abhydrolase domain-containing protein; part of the gene clusters that mediate the biosynthesis of the host-selective toxins (HSTs) ACT-toxins responsible for brown spot of tangerine disease by the tangerine pathotype which affects tangerines and mandarins. ACT-toxins consist of three moieties, 9,10-epoxy-8-hydroxy-9-methyl-decatrienoic acid (EDA), valine and a polyketide. ACT-toxin I is toxic to both citrus and pear; toxin II the 5''-deoxy derivative of ACT-toxin I, is highly toxic to pear and slightly toxic to citrus. On cellular level, ACT-toxins affect plasma membrane of susceptible cells and cause a sudden increase in loss of K(+) after a few minutes of toxin treatment. The acyl-CoA ligase ACTT1, the hydrolase ACTT2, the enoyl-CoA hydratases ACTT3 and ACTT6, and the acyl-CoA synthetase ACTT5 are all involved in the biosynthesis of the AK-, AF- and ACT-toxin common 9,10-epoxy-8-hydroxy-9-methyl-decatrienoic acid (EDA) structural moiety. The exact role of each enzyme, and of additional enzymes identified within the AF-toxin clusters have still to be determined. On the other hand, ACTTS1 to ACTTS4 are specific to the tangerine pathotype. The function of ACTTS3 is to elongate the polyketide chain portion of ACT-toxin that is unique to this toxin. The enoyl-reductase ACTTS2 might complement the missing enoyl-reductase (ER) domain in ACTTS3 in the synthesis of the polyketide portion of ACT-toxin. The roles of the nonribosomal peptide synthetases-related proteins ACTTS1 and ACTTS4 have also still not been elucidated. This chain is Abhydrolase domain-containing protein ACTT2, found in Alternaria alternata (Alternaria rot fungus).